Reading from the N-terminus, the 887-residue chain is MLSRLFRMHGLFVASHPWEVIVGTVTLTICMMSMNMFTGNNKICGWNYECPKFEEDVLSSDIIILTITRCIAILYIYFQFQNLRQLGSKYILGIAGLFTIFSSFVFSTVVIHFLDKELTGLNEALPFFLLLIDLSRASALAKFALSSNSQDEVRENIARGMAILGPTFTLDALVECLVIGVGTMSGVRQLEIMCCFGCMSVLANYFVFMTFFPACVSLVLELSRESREGRPIWQLSHFARVLEEEENKPNPVTQRVKMIMSLGLVLVHAHSRWIADPSPQNSTAEQSKVSLGLAEDVSKRIEPSVSLWQFYLSKMISMDIEQVITLSLALLLAVKYIFFEQAETESTLSLKNPITSPVVTPKKAQDNCCRREPLLVRRNQKLSSVEEDPGVNQDRKVEVIKPLVAEAETSGRATFVLGASAASPPLALGAQEPGIELPSEPRPNEECLQILESAEKGAKFLSDAEIIQLVNAKHIPAYKLETLMETHERGVSIRRQLLSAKLAEPSSLQYLPYRDYNYSLVMGACCENVIGYMPIPVGVAGPLCLDGKEYQVPMATTEGCLVASTNRGCRAISLGGGASSRVLADGMSRGPVVRLPRACDSAEVKSWLETPEGFAVVKEAFDSTSRFARLQKLHVTLAGRNLYIRLQSKTGDAMGMNMISKGTEKALLKLQEFFPELQILAVSGNYCTDKKPAAINWIEGRGKTVVCEAVIPAKVVREVLKTTTEAMVDVNINKNLVGSAMAGSIGGYNAHAANIVTAIYIACGQDAAQNVGSSNCITLMEASGPTNEDLYISCTMPSIEIGTVGGGTNLLPQQACLQMLGVQGACKDNPGENARQLARIVCGTVMAGELSLMAALAAGHLVRSHMVHNRSKINLQDLQGTCTKKAA.

At 1–9 (MLSRLFRMH) the chain is on the cytoplasmic side. A helical membrane pass occupies residues 10–39 (GLFVASHPWEVIVGTVTLTICMMSMNMFTG). Over 40 to 56 (NNKICGWNYECPKFEED) the chain is Lumenal. A helical membrane pass occupies residues 57–78 (VLSSDIIILTITRCIAILYIYF). Residues 61 to 218 (DIIILTITRC…MTFFPACVSL (158 aa)) form the SSD domain. Residues 75 to 78 (YIYF) carry the INSIG-binding motif motif. At 79–89 (QFQNLRQLGSK) the chain is on the cytoplasmic side. Residue lysine 89 forms a Glycyl lysine isopeptide (Lys-Gly) (interchain with G-Cter in ubiquitin) linkage. The chain crosses the membrane as a helical span at residues 90-114 (YILGIAGLFTIFSSFVFSTVVIHFL). At 115 to 123 (DKELTGLNE) the chain is on the lumenal side. Residues 124-149 (ALPFFLLLIDLSRASALAKFALSSNS) traverse the membrane as a helical segment. The Cytoplasmic segment spans residues 150–159 (QDEVRENIAR). A helical transmembrane segment spans residues 160–187 (GMAILGPTFTLDALVECLVIGVGTMSGV). Topologically, residues 188–191 (RQLE) are lumenal. The helical transmembrane segment at 192–220 (IMCCFGCMSVLANYFVFMTFFPACVSLVL) threads the bilayer. The Cytoplasmic segment spans residues 221–248 (ELSRESREGRPIWQLSHFARVLEEEENK). Residue lysine 248 forms a Glycyl lysine isopeptide (Lys-Gly) (interchain with G-Cter in ubiquitin) linkage. A helical membrane pass occupies residues 249 to 275 (PNPVTQRVKMIMSLGLVLVHAHSRWIA). Residues 276 to 314 (DPSPQNSTAEQSKVSLGLAEDVSKRIEPSVSLWQFYLSK) are Lumenal-facing. Asparagine 281 carries N-linked (GlcNAc...) asparagine glycosylation. A helical transmembrane segment spans residues 315–339 (MISMDIEQVITLSLALLLAVKYIFF). The Cytoplasmic segment spans residues 340-887 (EQAETESTLS…LQGTCTKKAA (548 aa)). Catalysis depends on charge relay system residues glutamate 558, lysine 690, and aspartate 766. Histidine 865 acts as the Proton donor in catalysis. Residue serine 871 is modified to Phosphoserine; by AMPK.

This sequence belongs to the HMG-CoA reductase family. As to quaternary structure, homotetramer. Homodimer. Interacts (via its SSD) with INSIG1; the interaction, accelerated by sterols, leads to the recruitment of HMGCR to AMFR/gp78 for its ubiquitination by the sterol-mediated ERAD pathway. Interacts with UBIAD1. Post-translationally, undergoes sterol-mediated ubiquitination and ER-associated degradation (ERAD). Accumulation of sterols in the endoplasmic reticulum (ER) membrane, triggers binding of the reductase to the ER membrane protein INSIG1 or INSIG2. The INSIG1 binding leads to the recruitment of the ubiquitin ligase, AMFR/gp78, RNF139 or RNF145, initiating ubiquitination of the reductase. The ubiquitinated reductase is then extracted from the ER membrane and delivered to cytosolic 26S proteosomes by a mechanism probably mediated by the ATPase Valosin-containing protein VCP/p97. The INSIG2-binding leads to the recruitment of the ubiquitin ligase RNF139, initiating ubiquitination of the reductase. Lys-248 is the main site of ubiquitination. Ubiquitination is enhanced by the presence of a geranylgeranylated protein. N-glycosylated. Deglycosylated by NGLY1 on release from the endoplasmic reticulum (ER) in a sterol-mediated manner. In terms of processing, phosphorylated. Phosphorylation at Ser-871 reduces the catalytic activity.

It is found in the endoplasmic reticulum membrane. The protein localises to the peroxisome membrane. The enzyme catalyses (R)-mevalonate + 2 NADP(+) + CoA = (3S)-3-hydroxy-3-methylglutaryl-CoA + 2 NADPH + 2 H(+). It participates in metabolic intermediate biosynthesis; (R)-mevalonate biosynthesis; (R)-mevalonate from acetyl-CoA: step 3/3. Its activity is regulated as follows. Regulated by a negative feedback mechanism through sterols and non-sterol metabolites derived from mevalonate. Phosphorylation at Ser-871 down-regulates the catalytic activity. Functionally, catalyzes the conversion of (3S)-hydroxy-3-methylglutaryl-CoA (HMG-CoA) to mevalonic acid, the rate-limiting step in the synthesis of cholesterol and other isoprenoids, thus plays a critical role in cellular cholesterol homeostasis. This chain is 3-hydroxy-3-methylglutaryl-coenzyme A reductase (Hmgcr), found in Rattus norvegicus (Rat).